The sequence spans 332 residues: Anthranilate phosphoribosyltransferase (332 aa).

5-phospho-alpha-D-ribose 1-diphosphate is bound by residues G79, 82-83, S87, 89-92, 107-115, and S119; these read GD, NIST, and KHGNRSVSS. Position 79 (G79) interacts with anthranilate. S91 serves as a coordination point for Mg(2+). Residue N110 participates in anthranilate binding. R165 contributes to the anthranilate binding site. Mg(2+) is bound by residues D223 and E224.

The protein belongs to the anthranilate phosphoribosyltransferase family. As to quaternary structure, homodimer. It depends on Mg(2+) as a cofactor.

It carries out the reaction N-(5-phospho-beta-D-ribosyl)anthranilate + diphosphate = 5-phospho-alpha-D-ribose 1-diphosphate + anthranilate. It functions in the pathway amino-acid biosynthesis; L-tryptophan biosynthesis; L-tryptophan from chorismate: step 2/5. Functionally, catalyzes the transfer of the phosphoribosyl group of 5-phosphorylribose-1-pyrophosphate (PRPP) to anthranilate to yield N-(5'-phosphoribosyl)-anthranilate (PRA). This Sodalis glossinidius (strain morsitans) protein is Anthranilate phosphoribosyltransferase.